Reading from the N-terminus, the 68-residue chain is Large ribosomal subunit protein bL32 (68 aa).

The tract at residues Met1–Gly25 is disordered.

The protein belongs to the bacterial ribosomal protein bL32 family.

The chain is Large ribosomal subunit protein bL32 from Dinoroseobacter shibae (strain DSM 16493 / NCIMB 14021 / DFL 12).